The chain runs to 294 residues: Major pollen allergen Pha a 5.3 (294 aa).

The signal sequence occupies residues 1–25 (MAVQKYTVALFLAMALVAGPAASYA).

Belongs to the Poa p IX/Phl p VI allergen family.

The sequence is that of Major pollen allergen Pha a 5.3 from Phalaris aquatica (Canary grass).